We begin with the raw amino-acid sequence, 247 residues long: DNA polymerase sliding clamp (247 aa).

This sequence belongs to the PCNA family. Homotrimer. The subunits circularize to form a toroid; DNA passes through its center. Replication factor C (RFC) is required to load the toroid on the DNA.

Functionally, sliding clamp subunit that acts as a moving platform for DNA processing. Responsible for tethering the catalytic subunit of DNA polymerase and other proteins to DNA during high-speed replication. The sequence is that of DNA polymerase sliding clamp from Haloarcula marismortui (strain ATCC 43049 / DSM 3752 / JCM 8966 / VKM B-1809) (Halobacterium marismortui).